The sequence spans 73 residues: Conotoxin Gla(3)-TxVI (73 aa).

Residues 1–19 (MQKLIILLLVAAVLMSAQA) form the signal peptide. A propeptide spanning residues 20–44 (VLQEKRPKEKIKFLSKRKTDAEKQQ) is cleaved from the precursor. 3 disulfides stabilise this stretch: C48-C62, C55-C66, and C61-C71. Position 49 is a 4-hydroxyproline (P49). E53 is subject to 4-carboxyglutamate; partial. P54 is modified (4-hydroxyproline). 4-carboxyglutamate is present on E60. Residue W64 is modified to 6'-bromotryptophan.

The protein belongs to the conotoxin O2 superfamily. In terms of tissue distribution, expressed by the venom duct.

The protein resides in the secreted. This is Conotoxin Gla(3)-TxVI from Conus textile (Cloth-of-gold cone).